We begin with the raw amino-acid sequence, 396 residues long: Chorismate synthase (396 aa).

2 residues coordinate NADP(+): Arg-40 and Arg-46. FMN contacts are provided by residues 134 to 136, 257 to 258, Gly-302, 317 to 321, and Arg-343; these read RSS, QA, and KPIPS.

The protein belongs to the chorismate synthase family. In terms of assembly, homotetramer. It depends on FMNH2 as a cofactor.

It carries out the reaction 5-O-(1-carboxyvinyl)-3-phosphoshikimate = chorismate + phosphate. It functions in the pathway metabolic intermediate biosynthesis; chorismate biosynthesis; chorismate from D-erythrose 4-phosphate and phosphoenolpyruvate: step 7/7. Functionally, catalyzes the anti-1,4-elimination of the C-3 phosphate and the C-6 proR hydrogen from 5-enolpyruvylshikimate-3-phosphate (EPSP) to yield chorismate, which is the branch point compound that serves as the starting substrate for the three terminal pathways of aromatic amino acid biosynthesis. This reaction introduces a second double bond into the aromatic ring system. This is Chorismate synthase from Bifidobacterium animalis subsp. lactis (strain AD011).